The sequence spans 50 residues: Large ribosomal subunit protein bL33A (50 aa).

Belongs to the bacterial ribosomal protein bL33 family.

The chain is Large ribosomal subunit protein bL33A from Streptococcus thermophilus (strain CNRZ 1066).